The sequence spans 247 residues: Sortase A (247 aa).

The Cytoplasmic segment spans residues methionine 1–glycine 9. Residues phenylalanine 10–valine 30 traverse the membrane as a helical segment. Topologically, residues phenylalanine 31–leucine 247 are extracellular. Histidine 140 serves as the catalytic Proton donor/acceptor. Residue cysteine 206 is the Acyl-thioester intermediate of the active site.

Belongs to the bacterial sortase family. Class A subfamily.

It is found in the cell membrane. Its function is as follows. Transpeptidase that anchors surface proteins to the cell wall. Recognizes and modifies its substrate by proteolytic cleavage of a C-terminal sorting signal. Following cleavage, a covalent intermediate is formed via a thioester bond between the sortase and its substrate, which is then transferred and covalently attached to the cell wall. This sortase recognizes a Leu-Pro-x-Thr-Gly (LPXTG) motif, which is cleaved by the sortase between the threonine and glycine residues. Essential for adherence to eukaryotic cells and for binding to fibronectin and fibrinogen. The polypeptide is Sortase A (Streptococcus agalactiae serotype III (strain NEM316)).